Here is an 86-residue protein sequence, read N- to C-terminus: Co-chaperonin GroES (86 aa).

Belongs to the GroES chaperonin family. Heptamer of 7 subunits arranged in a ring. Interacts with the chaperonin GroEL.

The protein localises to the cytoplasm. Together with the chaperonin GroEL, plays an essential role in assisting protein folding. The GroEL-GroES system forms a nano-cage that allows encapsulation of the non-native substrate proteins and provides a physical environment optimized to promote and accelerate protein folding. GroES binds to the apical surface of the GroEL ring, thereby capping the opening of the GroEL channel. This chain is Co-chaperonin GroES, found in Campylobacter jejuni subsp. doylei (strain ATCC BAA-1458 / RM4099 / 269.97).